Reading from the N-terminus, the 396-residue chain is 1-deoxy-D-xylulose 5-phosphate reductoisomerase (396 aa).

Residues threonine 10, glycine 11, serine 12, isoleucine 13, and asparagine 123 each coordinate NADPH. Lysine 124 is a binding site for 1-deoxy-D-xylulose 5-phosphate. Residue glutamate 125 participates in NADPH binding. Aspartate 149 serves as a coordination point for Mn(2+). Positions 150, 151, 185, and 208 each coordinate 1-deoxy-D-xylulose 5-phosphate. Glutamate 151 contributes to the Mn(2+) binding site. An NADPH-binding site is contributed by glycine 214. 1-deoxy-D-xylulose 5-phosphate is bound by residues serine 221, asparagine 226, lysine 227, and glutamate 230. A Mn(2+)-binding site is contributed by glutamate 230.

Belongs to the DXR family. Requires Mg(2+) as cofactor. The cofactor is Mn(2+).

It catalyses the reaction 2-C-methyl-D-erythritol 4-phosphate + NADP(+) = 1-deoxy-D-xylulose 5-phosphate + NADPH + H(+). It participates in isoprenoid biosynthesis; isopentenyl diphosphate biosynthesis via DXP pathway; isopentenyl diphosphate from 1-deoxy-D-xylulose 5-phosphate: step 1/6. Functionally, catalyzes the NADPH-dependent rearrangement and reduction of 1-deoxy-D-xylulose-5-phosphate (DXP) to 2-C-methyl-D-erythritol 4-phosphate (MEP). This is 1-deoxy-D-xylulose 5-phosphate reductoisomerase from Shewanella sp. (strain MR-7).